Reading from the N-terminus, the 478-residue chain is Growth/differentiation factor 10 (478 aa).

A signal peptide spans 1-33 (MAHVPARTSPGPGPQLLLLLLPLFLLLLRDVAG). A propeptide spanning residues 34 to 368 (SHRAPAWSAL…EKTMQKARRK (335 aa)) is cleaved from the precursor. N118, N156, and N281 each carry an N-linked (GlcNAc...) asparagine glycan. Positions 266 to 319 (YDPFPAGDPEPRAAPNNSADPRVRRAAQATGPLQDNELPGLDERPPRAHAQHFH) are disordered. 3 disulfide bridges follow: C376-C443, C405-C475, and C409-C477. N469 carries N-linked (GlcNAc...) asparagine glycosylation.

It belongs to the TGF-beta family. Homodimer or heterodimer. Can form a non-covalent complex of the mature region and the pro-region. In terms of tissue distribution, expressed in femur, brain, lung, skeletal muscle, pancreas and testis.

Its subcellular location is the secreted. Functionally, growth factor involved in osteogenesis and adipogenesis. Plays an inhibitory role in the process of osteoblast differentiation via SMAD2/3 pathway. Plays an inhibitory role in the process of adipogenesis. The sequence is that of Growth/differentiation factor 10 from Homo sapiens (Human).